A 152-amino-acid polypeptide reads, in one-letter code: Ribosomal RNA large subunit methyltransferase H (152 aa).

Residues L68, G100, and 119–124 (FGRMTW) each bind S-adenosyl-L-methionine.

Belongs to the RNA methyltransferase RlmH family. As to quaternary structure, homodimer.

Its subcellular location is the cytoplasm. The enzyme catalyses pseudouridine(1915) in 23S rRNA + S-adenosyl-L-methionine = N(3)-methylpseudouridine(1915) in 23S rRNA + S-adenosyl-L-homocysteine + H(+). Specifically methylates the pseudouridine at position 1915 (m3Psi1915) in 23S rRNA. The polypeptide is Ribosomal RNA large subunit methyltransferase H (Paramagnetospirillum magneticum (strain ATCC 700264 / AMB-1) (Magnetospirillum magneticum)).